The sequence spans 127 residues: uncharacterized protein (127 aa).

2 consecutive transmembrane segments (helical) span residues 48-68 and 83-103; these read LYSLLFSKVSIISCAVLPLSI and VFLFLLSLHLLPYLASRCLID.

It localises to the membrane. This is an uncharacterized protein from Saccharomyces cerevisiae (strain ATCC 204508 / S288c) (Baker's yeast).